The sequence spans 89 residues: Microcin N (89 aa).

The N-terminal stretch at 1 to 15 is a signal peptide; that stretch reads MRELDREELNCVGGA.

It belongs to the class IIa microcin family. Mass spectrometry suggests 3 of the 4 Met residues of the mature peptide are oxidized.

Its subcellular location is the secreted. Its function is as follows. Active against E.coli and Salmonella, but not Listeria or Campylobacter. Channel-forming microcin. Probably neutralized by its immunity protein McnI. The protein is Microcin N of Escherichia coli.